The following is a 464-amino-acid chain: Chitobiosyldiphosphodolichol beta-mannosyltransferase (464 aa).

Residues 1–2 (MA) are Lumenal-facing. Residues 3–23 (ASCLVLLALCLLLPLLLLGGW) traverse the membrane as a helical segment. Residues 24-99 (KRWRRGRTAR…ELQSLAVGPR (76 aa)) lie on the Cytoplasmic side of the membrane. The segment at residues 100–120 (VFQYGVKVVFQAMYLLWKLMW) is an intramembrane region (helical). Topologically, residues 121–464 (REPGAYIFLQ…QTVLPLVMDT (344 aa)) are cytoplasmic. Residue Ser-242 is modified to Phosphoserine. The disordered stretch occupies residues 242–261 (SPFRARSEPEDPATERSAFT).

Belongs to the glycosyltransferase group 1 family. Glycosyltransferase 33 subfamily.

The protein resides in the endoplasmic reticulum membrane. It carries out the reaction an N,N'-diacetylchitobiosyl-diphospho-di-trans,poly-cis-dolichol + GDP-alpha-D-mannose = a beta-D-Man-(1-&gt;4)-beta-D-GlcNAc-(1-&gt;4)-alpha-D-GlcNAc-diphospho-di-trans,poly-cis-dolichol + GDP + H(+). Its pathway is protein modification; protein glycosylation. Mannosyltransferase that operates in the biosynthetic pathway of dolichol-linked oligosaccharides, the glycan precursors employed in protein asparagine (N)-glycosylation. The assembly of dolichol-linked oligosaccharides begins on the cytosolic side of the endoplasmic reticulum membrane and finishes in its lumen. The sequential addition of sugars to dolichol pyrophosphate produces dolichol-linked oligosaccharides containing fourteen sugars, including two GlcNAcs, nine mannoses and three glucoses. Once assembled, the oligosaccharide is transferred from the lipid to nascent proteins by oligosaccharyltransferases. Catalyzes, on the cytoplasmic face of the endoplasmic reticulum, the addition of the first mannose residues to the dolichol-linked oligosaccharide chain, to produce Man1GlcNAc(2)-PP-dolichol core oligosaccharide. Man1GlcNAc(2)-PP-dolichol is a substrate for ALG2, the following enzyme in the biosynthetic pathway. This is Chitobiosyldiphosphodolichol beta-mannosyltransferase from Pongo abelii (Sumatran orangutan).